Consider the following 132-residue polypeptide: Fatty acid-binding protein, brain (132 aa).

V2 carries the N-acetylvaline modification. Residue 127 to 129 (RHY) coordinates a fatty acid.

It belongs to the calycin superfamily. Fatty-acid binding protein (FABP) family.

The protein resides in the cytoplasm. FABPs are thought to play a role in the intracellular transport of long-chain fatty acids and their acyl-CoA esters. The sequence is that of Fatty acid-binding protein, brain (FABP7) from Gallus gallus (Chicken).